Here is a 229-residue protein sequence, read N- to C-terminus: Ribonuclease 3 (229 aa).

The RNase III domain occupies 5-127 (LAGLERKLGY…LIGAIYLDAD (123 aa)). A Mg(2+)-binding site is contributed by E40. Residue D44 is part of the active site. Residues D113 and E116 each contribute to the Mg(2+) site. The active site involves E116. A DRBM domain is found at 154–224 (DPKTRLQEFL…AASALIALGV (71 aa)).

The protein belongs to the ribonuclease III family. As to quaternary structure, homodimer. Mg(2+) is required as a cofactor.

It is found in the cytoplasm. It catalyses the reaction Endonucleolytic cleavage to 5'-phosphomonoester.. Digests double-stranded RNA. Involved in the processing of primary rRNA transcript to yield the immediate precursors to the large and small rRNAs (23S and 16S). Processes some mRNAs, and tRNAs when they are encoded in the rRNA operon. Processes pre-crRNA and tracrRNA of type II CRISPR loci if present in the organism. In Pseudomonas putida (strain ATCC 700007 / DSM 6899 / JCM 31910 / BCRC 17059 / LMG 24140 / F1), this protein is Ribonuclease 3.